We begin with the raw amino-acid sequence, 211 residues long: Proteasome subunit beta 2 (211 aa).

Residues 1 to 17 (MVIMGNELQLENKILKG) constitute a propeptide, removed in mature form; by autocatalysis. Thr-18 acts as the Nucleophile in catalysis.

The protein belongs to the peptidase T1B family. As to quaternary structure, the 20S proteasome core is composed of 14 alpha and 14 beta subunits that assemble into four stacked heptameric rings, resulting in a barrel-shaped structure. The two inner rings, each composed of seven catalytic beta subunits, are sandwiched by two outer rings, each composed of seven alpha subunits. The catalytic chamber with the active sites is on the inside of the barrel. Has a gated structure, the ends of the cylinder being occluded by the N-termini of the alpha-subunits. Is capped at one or both ends by the proteasome regulatory ATPase, PAN.

It is found in the cytoplasm. It catalyses the reaction Cleavage of peptide bonds with very broad specificity.. The formation of the proteasomal ATPase PAN-20S proteasome complex, via the docking of the C-termini of PAN into the intersubunit pockets in the alpha-rings, triggers opening of the gate for substrate entry. Interconversion between the open-gate and close-gate conformations leads to a dynamic regulation of the 20S proteasome proteolysis activity. Its function is as follows. Component of the proteasome core, a large protease complex with broad specificity involved in protein degradation. This is Proteasome subunit beta 2 from Saccharolobus solfataricus (strain 98/2) (Sulfolobus solfataricus).